Consider the following 242-residue polypeptide: Eukaryotic translation initiation factor 4E type 1B (242 aa).

The tract at residues 1–42 (MLAVEVSEAEGGIREWEEEEKEEEAAERTPTGEKSPNSPRTL) is disordered. Residues 16–25 (WEEEEKEEEA) are compositionally biased toward acidic residues. The segment covering 32 to 41 (GEKSPNSPRT) has biased composition (polar residues). The interval 62 to 65 (HPLQ) is EIF4EBP1/2/3 binding. MRNA is bound at residue 81–82 (WQ). The segment at 98–102 (WALYS) is EIF4EBP1/2/3 binding. 127 to 128 (WE) is a binding site for mRNA. The interval 157–164 (ETLLCLIG) is EIF4EBP1/2/3 binding. MRNA-binding positions include 182–187 (RTKGDK) and 230–232 (TKS).

Belongs to the eukaryotic initiation factor 4E family. As to quaternary structure, eIF4F is a multi-subunit complex, the composition of which varies with external and internal environmental conditions. It is composed of at least EIF4A, EIF4E and EIF4G.

Functionally, recognizes and binds the 7-methylguanosine-containing mRNA cap during an early step in the initiation of protein synthesis and facilitates ribosome binding by inducing the unwinding of the mRNAs secondary structure. In Homo sapiens (Human), this protein is Eukaryotic translation initiation factor 4E type 1B (EIF4E1B).